Here is a 406-residue protein sequence, read N- to C-terminus: Linalool 8-monooxygenase (406 aa).

Cys355 contacts heme.

This sequence belongs to the cytochrome P450 family. It depends on heme as a cofactor.

It catalyses the reaction linalool + 2 reduced [NADPH--hemoprotein reductase] + 2 O2 = (6E)-8-oxolinalool + 2 oxidized [NADPH--hemoprotein reductase] + 3 H2O + 2 H(+). Its pathway is terpene metabolism; linalool degradation. Its function is as follows. Catalyzes the 8-methyl hydroxylation of linalool. The chain is Linalool 8-monooxygenase (linC) from Pseudomonas putida (Arthrobacter siderocapsulatus).